Here is a 363-residue protein sequence, read N- to C-terminus: UDP-N-acetylglucosamine--N-acetylmuramyl-(pentapeptide) pyrophosphoryl-undecaprenol N-acetylglucosamine transferase (363 aa).

Residues 15–17, Asn127, Arg163, Ser191, Ile244, 263–268, and Gln288 each bind UDP-N-acetyl-alpha-D-glucosamine; these read TGG and ALTVSE.

It belongs to the glycosyltransferase 28 family. MurG subfamily.

The protein localises to the cell inner membrane. The enzyme catalyses di-trans,octa-cis-undecaprenyl diphospho-N-acetyl-alpha-D-muramoyl-L-alanyl-D-glutamyl-meso-2,6-diaminopimeloyl-D-alanyl-D-alanine + UDP-N-acetyl-alpha-D-glucosamine = di-trans,octa-cis-undecaprenyl diphospho-[N-acetyl-alpha-D-glucosaminyl-(1-&gt;4)]-N-acetyl-alpha-D-muramoyl-L-alanyl-D-glutamyl-meso-2,6-diaminopimeloyl-D-alanyl-D-alanine + UDP + H(+). It participates in cell wall biogenesis; peptidoglycan biosynthesis. Cell wall formation. Catalyzes the transfer of a GlcNAc subunit on undecaprenyl-pyrophosphoryl-MurNAc-pentapeptide (lipid intermediate I) to form undecaprenyl-pyrophosphoryl-MurNAc-(pentapeptide)GlcNAc (lipid intermediate II). The polypeptide is UDP-N-acetylglucosamine--N-acetylmuramyl-(pentapeptide) pyrophosphoryl-undecaprenol N-acetylglucosamine transferase (Pectobacterium carotovorum subsp. carotovorum (strain PC1)).